We begin with the raw amino-acid sequence, 1163 residues long: NACHT, LRR and PYD domains-containing protein 5 (1163 aa).

3 stretches are compositionally biased toward basic and acidic residues: residues 1–42 (MGPP…KDQG), 56–94 (PEKE…KDQG), and 108–127 (PEKD…EQKS). The tract at residues 1–201 (MGPPEKESKA…TEADKDNGGD (201 aa)) is disordered. Polar residues predominate over residues 128-137 (ESTMSPSENV). Residues 153–173 (ASERKMTSPENDSKSIQKDQG) show a composition bias toward basic and acidic residues. The NACHT domain occupies 243–565 (HTIILHGRPG…AALYYVLEGL (323 aa)). 249-256 (GRPGVGKS) provides a ligand contact to ATP. 11 LRR repeats span residues 801–822 (NLKY…LACE), 830–851 (SVET…MIST), 858–878 (RLKC…ISLG), 887–906 (LLQK…CHLL), 915–935 (NLTH…QQLC), 944–964 (ALQR…GFLA), 972–993 (KLTH…LLCE), 1001–1022 (YLQE…DLAC), 1029–1050 (HLKS…TLCE), 1058–1079 (SLRR…ALSL), and 1086–1107 (HLNS…KLCS).

This sequence belongs to the NLRP family. In terms of assembly, component of the subcortical maternal complex (SCMC), at least composed of NLRP5, KHDC3, OOEP, and TLE6. Within the complex, interacts with OOEP, KHDC3 and TLE6. The SCMC may facilitate translocation of its components between the nuclear and cytoplasmic compartments. As part of the SCMC interacts with the SCMC-associated protein ZBED3. As part of the SCMC interacts with the SCMC-associated protein CFL1/Cofilin-1. Interacts with PRKCE. Interacts with TUBB3 at cytoskeleton microtubules. Post-translationally, phosphorylated by PRKCE.

It is found in the cytoplasm. It localises to the cytoplasmic vesicle. The protein resides in the secretory vesicle. Its subcellular location is the cortical granule. The protein localises to the mitochondrion. It is found in the nucleus. It localises to the nucleolus. The protein resides in the golgi apparatus. Its function is as follows. Component of the subcortical maternal complex (SCMC), a multiprotein complex that plays a key role in early embryonic development. The SCMC complex is a structural constituent of cytoplasmic lattices, which consist in fibrous structures found in the cytoplasm of oocytes and preimplantation embryos. They are required to store maternal proteins critical for embryonic development, such as proteins that control epigenetic reprogramming of the preimplantation embryo, and prevent their degradation or activation. Required for the localization of cortical granules to the cortex of oocytes, via association with the cortical actin scaffold. Required for cortical actin clearance prior to oocyte exocytosis and prevention of polyspermy. Involved in regulating post-fertilization Ca(2+) release and endoplasmic reticulum storage (ER) storage via regulation of cellular localization. May be involved in the localization of mitochondria to the cytoplasm and perinuclear region in oocytes and early stage embryos, independent of its role in CPL formation. The polypeptide is NACHT, LRR and PYD domains-containing protein 5 (Mus musculus (Mouse)).